Reading from the N-terminus, the 419-residue chain is MDKLAIQASPPLAGDVIISGAKNAALPILMAGVLAETDFIVSNVPNLRDVSTSCKLLRCLGAEVDELGNGQIRISTKNLNEFCAPYDLVKTMRASILILGPLLARYGTADVSLPGGCAIGARPVNLHLHGLEMMGAKIEVKEGYIKARVDGRLKGAHIFMDMVSVGATENLLMAAALADGETVIENAAREPEVIDLANCLIAMGAKITGVGSATLRIQGVERLQGCEYRVMPDRIETGSFLVAAAVTRGRIRCLKADPASLESVIAKLEDAGAKITTGEDWIELDMEGKRPKAVNIKTAPYPGFPTDMQAQFCVLNVLAQGTATITETIFENRFMHVPELIRMGANMELEGNTCIIQGIESLSGAQVMATDLRASASLVIAGLVADGKTIVDRIYHLDRGYEHIEQKFQGLGAHVERVQ.

22 to 23 (KN) lines the phosphoenolpyruvate pocket. Residue arginine 93 participates in UDP-N-acetyl-alpha-D-glucosamine binding. The active-site Proton donor is the cysteine 117. Residue cysteine 117 is modified to 2-(S-cysteinyl)pyruvic acid O-phosphothioketal. The UDP-N-acetyl-alpha-D-glucosamine site is built by aspartate 307 and isoleucine 329.

It belongs to the EPSP synthase family. MurA subfamily.

It is found in the cytoplasm. It carries out the reaction phosphoenolpyruvate + UDP-N-acetyl-alpha-D-glucosamine = UDP-N-acetyl-3-O-(1-carboxyvinyl)-alpha-D-glucosamine + phosphate. Its pathway is cell wall biogenesis; peptidoglycan biosynthesis. Cell wall formation. Adds enolpyruvyl to UDP-N-acetylglucosamine. This is UDP-N-acetylglucosamine 1-carboxyvinyltransferase from Shewanella sp. (strain MR-7).